The sequence spans 720 residues: MSKKRIYEYAKELNLKSKEIIDELKSMNVEVSNHMQALEEEQIKALDKKFKASQAKDTNKQNTQNNHQKSNNKQNSNDKEKQQSKNNSKPTKKKEQNNKGKQQNKNNKTNKNQKNNKNKKNNKNNKPQNEVEETKEMPSKITYQEGITVGELAEKLNVESAGIIKKLFLLGIMANINQSLDEETLELIADDYGVEIEKEVVVDEEDLSIYFDDETDDSDAIERPAVVTIMGHVDHGKTTLLDSIRNTKVTEGEAGGITQHIGAYQIENSGKKITFLDTPGHAAFTTMRARGAQVTDITILVVAADDGVMPQTIEAINHAKEAEVPTIVAVNKIDKPTANPDRVMQELTEYGLIPEDWGGDTIFVPLSALSGDGIDDLLEMIGLVAEVQELKANPNKQAVGTVIEAELDKSRGPAASLLVQNGTLNVGDAIVVGNTYGRIRAMVNDLGKRIKSAGPSTPVEITGINDVPLAGDRFVVFGDEKQARRIGEARHEASVIQQRQESKNVSLDNLFEQMKQGEMKDLNVIIKGDVQGSVEALAASLMKIDVEGVNVRIIHTAVGAINESDVTLANASNGIIIGFNVRPDAGAKRAAEAENVDMRLHRVIYNVIEEIESAMKGLLDPEFEEQVIGQAEVRQTFKVSKVGTIAGSYVTEGKITRNAGVRVIRDGIVLFEGELDTLKRFKDDAKEVAQGYECGITIEKYNDLKEGDIIEAFEMVEIQR.

Residues 48-138 form a disordered region; that stretch reads KKFKASQAKD…NEVEETKEMP (91 aa). 2 stretches are compositionally biased toward low complexity: residues 60–75 and 99–113; these read KQNT…NKQN and KGKQ…NKNQ. Positions 114–123 are enriched in basic residues; it reads KNNKNKKNNK. One can recognise a tr-type G domain in the interval 222–391; it reads ERPAVVTIMG…GLVAEVQELK (170 aa). A G1 region spans residues 231–238; it reads GHVDHGKT. 231–238 serves as a coordination point for GTP; it reads GHVDHGKT. The interval 256–260 is G2; it reads GITQH. Residues 277 to 280 form a G3 region; sequence DTPG. Residues 277–281 and 331–334 contribute to the GTP site; these read DTPGH and NKID. The G4 stretch occupies residues 331–334; that stretch reads NKID. A G5 region spans residues 367–369; sequence SAL.

It belongs to the TRAFAC class translation factor GTPase superfamily. Classic translation factor GTPase family. IF-2 subfamily.

The protein resides in the cytoplasm. One of the essential components for the initiation of protein synthesis. Protects formylmethionyl-tRNA from spontaneous hydrolysis and promotes its binding to the 30S ribosomal subunits. Also involved in the hydrolysis of GTP during the formation of the 70S ribosomal complex. The polypeptide is Translation initiation factor IF-2 (Staphylococcus epidermidis (strain ATCC 35984 / DSM 28319 / BCRC 17069 / CCUG 31568 / BM 3577 / RP62A)).